Here is a 411-residue protein sequence, read N- to C-terminus: Multidrug resistance protein MdtH (411 aa).

Helical transmembrane passes span 13–33, 45–65, 73–95, 99–116, 139–159, 165–185, 213–233, 243–263, 288–308, 340–360, and 365–385; these read YFLL…FPLI, ALLV…LGIF, LGAK…FMGI, PWLL…GTLF, LLMI…SWLL, LVCL…AWLL, YVFT…ILPI, AAVR…LYPI, IIPI…GIFY, LGLA…YDMG, and IPQL…LGFY.

Belongs to the major facilitator superfamily. DHA1 family. MdtH (TC 2.A.1.2.21) subfamily.

It localises to the cell membrane. The chain is Multidrug resistance protein MdtH from Baumannia cicadellinicola subsp. Homalodisca coagulata.